We begin with the raw amino-acid sequence, 662 residues long: Retaining alpha-galactosidase (662 aa).

A signal peptide spans 1 to 19; that stretch reads MKKLTFLLLCVLCTLSLQA. E174 is a binding site for Ca(2+). D415 serves as the catalytic Nucleophile. Ca(2+) contacts are provided by E464 and E470. Residue E470 is the Proton donor/acceptor of the active site.

This sequence belongs to the glycosyl hydrolase 97 family. As to quaternary structure, monomer. The cofactor is Ca(2+).

It carries out the reaction Hydrolysis of terminal, non-reducing alpha-D-galactose residues in alpha-D-galactosides, including galactose oligosaccharides, galactomannans and galactolipids.. Its activity is regulated as follows. Inhibited by EDTA in vitro. Its function is as follows. Galactosidase that is able to hydrolyze the alpha-1,6 disaccharide melibiose and the synthetic p-nitrophenyl alpha-galactoside substrate (pNP-Gal), with retention of the anomeric configuration. Does not hydrolyze DNP-Glc or pNP-Glc. The sequence is that of Retaining alpha-galactosidase from Bacteroides thetaiotaomicron (strain ATCC 29148 / DSM 2079 / JCM 5827 / CCUG 10774 / NCTC 10582 / VPI-5482 / E50).